A 255-amino-acid chain; its full sequence is tRNA pseudouridine synthase A (255 aa).

Asp56 functions as the Nucleophile in the catalytic mechanism. Residue Tyr114 participates in substrate binding.

This sequence belongs to the tRNA pseudouridine synthase TruA family. In terms of assembly, homodimer.

The enzyme catalyses uridine(38/39/40) in tRNA = pseudouridine(38/39/40) in tRNA. Formation of pseudouridine at positions 38, 39 and 40 in the anticodon stem and loop of transfer RNAs. This Methylacidiphilum infernorum (isolate V4) (Methylokorus infernorum (strain V4)) protein is tRNA pseudouridine synthase A.